We begin with the raw amino-acid sequence, 513 residues long: Gluconokinase (513 aa).

ATP contacts are provided by residues K16, T261, G300, and 412–416 (GFARS).

The protein belongs to the FGGY kinase family.

The enzyme catalyses D-gluconate + ATP = 6-phospho-D-gluconate + ADP + H(+). Its pathway is carbohydrate acid metabolism; D-gluconate degradation. Catabolite repression by gluconate. This chain is Gluconokinase (gntK), found in Bacillus licheniformis.